A 193-amino-acid chain; its full sequence is Secreted RxLR effector protein 126 (193 aa).

An N-terminal signal peptide occupies residues 1–20 (MRYLLAVLIAAAFVISSGTS). The short motif at 50-64 (RMLQTKAVNGLEEER) is the RxLR-dEER element.

It belongs to the RxLR effector family.

The protein resides in the secreted. It is found in the host membrane. Its function is as follows. Secreted effector that completely suppresses the host cell death induced by cell death-inducing proteins. The chain is Secreted RxLR effector protein 126 from Plasmopara viticola (Downy mildew of grapevine).